The chain runs to 891 residues: Kinesin-like protein KIN-UB (891 aa).

Positions 1 to 54 are disordered; the sequence is MSGKVANATPKAAAGKPRLSAAGGGAYRRTSSGPLPSAGGGGGRASSESGVSSR. Positions 45–54 are enriched in low complexity; the sequence is ASSESGVSSR. The Kinesin motor domain occupies 54 to 400; it reads RVRVAVRLRP…IMFGQRAMKV (347 aa). Position 139-146 (139-146) interacts with ATP; the sequence is GQTGTGKT. A D-BOX motif is present at residues 370 to 378; it reads RTSLVVTIG. The stretch at 502 to 592 forms a coiled coil; it reads TSSEVGEVQN…ADETRRSLDR (91 aa). A compositionally biased stretch (basic and acidic residues) spans 586 to 595; that stretch reads TRRSLDRGDG. A disordered region spans residues 586-626; that stretch reads TRRSLDRGDGSGKIFPGFDSLMSHSRNSQPREQSNGPKPPI. The span at 607 to 621 shows a compositional bias: polar residues; the sequence is MSHSRNSQPREQSNG. ARM repeat units follow at residues 623–662, 664–704, 706–746, and 748–787; these read KPPI…NLAA, EANQ…NLAM, ETNQ…NLCG, and DKLQ…NFAK.

Belongs to the TRAFAC class myosin-kinesin ATPase superfamily. Kinesin family. Ungrouped subfamily.

It localises to the cytoplasm. Its subcellular location is the cytoskeleton. The protein is Kinesin-like protein KIN-UB of Oryza sativa subsp. japonica (Rice).